Reading from the N-terminus, the 236-residue chain is 2,3,4,5-tetrahydropyridine-2,6-dicarboxylate N-acetyltransferase (236 aa).

This sequence belongs to the transferase hexapeptide repeat family. DapH subfamily.

It catalyses the reaction (S)-2,3,4,5-tetrahydrodipicolinate + acetyl-CoA + H2O = L-2-acetamido-6-oxoheptanedioate + CoA. The protein operates within amino-acid biosynthesis; L-lysine biosynthesis via DAP pathway; LL-2,6-diaminopimelate from (S)-tetrahydrodipicolinate (acetylase route): step 1/3. Catalyzes the transfer of an acetyl group from acetyl-CoA to tetrahydrodipicolinate. The polypeptide is 2,3,4,5-tetrahydropyridine-2,6-dicarboxylate N-acetyltransferase (Brevibacillus brevis (strain 47 / JCM 6285 / NBRC 100599)).